A 36-amino-acid polypeptide reads, in one-letter code: U1-ectatotoxin-Et1b subunit B (36 aa).

A disulfide bridge links C11 with C33.

This sequence belongs to the ectatomin family. Ectatomin-Et subfamily. Heterodimer of subunits A and B; disulfide-linked. As to expression, expressed by the venom gland.

It is found in the secreted. It localises to the target cell membrane. The sequence is that of U1-ectatotoxin-Et1b subunit B from Ectatomma tuberculatum (Selva ant).